The following is a 378-amino-acid chain: Quinolinate synthase (378 aa).

Iminosuccinate-binding residues include H59 and S80. C125 contacts [4Fe-4S] cluster. Residues 151–153 (YAN) and S168 each bind iminosuccinate. A [4Fe-4S] cluster-binding site is contributed by C212. Iminosuccinate contacts are provided by residues 238–240 (HPE) and T255. C309 serves as a coordination point for [4Fe-4S] cluster.

The protein belongs to the quinolinate synthase family. Type 1 subfamily. It depends on [4Fe-4S] cluster as a cofactor.

The protein localises to the cytoplasm. The catalysed reaction is iminosuccinate + dihydroxyacetone phosphate = quinolinate + phosphate + 2 H2O + H(+). The protein operates within cofactor biosynthesis; NAD(+) biosynthesis; quinolinate from iminoaspartate: step 1/1. Functionally, catalyzes the condensation of iminoaspartate with dihydroxyacetone phosphate to form quinolinate. The protein is Quinolinate synthase of Burkholderia thailandensis (strain ATCC 700388 / DSM 13276 / CCUG 48851 / CIP 106301 / E264).